The chain runs to 303 residues: UDP-3-O-acyl-N-acetylglucosamine deacetylase (303 aa).

Residues H78, H237, and D241 each contribute to the Zn(2+) site. H264 functions as the Proton donor in the catalytic mechanism.

The protein belongs to the LpxC family. Zn(2+) serves as cofactor.

The enzyme catalyses a UDP-3-O-[(3R)-3-hydroxyacyl]-N-acetyl-alpha-D-glucosamine + H2O = a UDP-3-O-[(3R)-3-hydroxyacyl]-alpha-D-glucosamine + acetate. The protein operates within glycolipid biosynthesis; lipid IV(A) biosynthesis; lipid IV(A) from (3R)-3-hydroxytetradecanoyl-[acyl-carrier-protein] and UDP-N-acetyl-alpha-D-glucosamine: step 2/6. Functionally, catalyzes the hydrolysis of UDP-3-O-myristoyl-N-acetylglucosamine to form UDP-3-O-myristoylglucosamine and acetate, the committed step in lipid A biosynthesis. The chain is UDP-3-O-acyl-N-acetylglucosamine deacetylase from Chromohalobacter salexigens (strain ATCC BAA-138 / DSM 3043 / CIP 106854 / NCIMB 13768 / 1H11).